The primary structure comprises 2570 residues: Stabilin-1 (2570 aa).

Positions 1 to 25 (MAGPRGLLPLCLLAFCLAGFSFVRG) are cleaved as a signal peptide. The Extracellular segment spans residues 26–2478 (QVLFKGCDVK…LAPEAPPVAA (2453 aa)). 4 EGF-like domains span residues 110–148 (HECP…SACQ), 156–193 (FGPD…PHCD), 195–229 (ELPV…QGSE), and 232–271 (APNP…MVCL). 11 cysteine pairs are disulfide-bonded: Cys112–Cys126, Cys120–Cys136, Cys138–Cys147, Cys160–Cys171, Cys164–Cys181, Cys183–Cys192, Cys199–Cys210, Cys204–Cys217, Cys236–Cys247, Cys241–Cys257, and Cys259–Cys270. The N-linked (GlcNAc...) asparagine glycan is linked to Asn133. N-linked (GlcNAc...) asparagine glycosylation is found at Asn286, Asn312, Asn413, Asn606, Asn673, Asn712, and Asn745. FAS1 domains are found at residues 356-494 (YGHL…TGLR) and 506-641 (KRTI…DGIL). The EGF-like 5 domain occupies 728-768 (DCTQCPGGFSNPCYGKGNCSDGIQGNGACLCFPDYKGIACH). 3 disulfide bridges follow: Cys732–Cys746, Cys740–Cys756, and Cys758–Cys767. Asn816 carries an N-linked (GlcNAc...) asparagine glycan. 4 EGF-like domains span residues 818-858 (SMGD…DGFS), 861-903 (PSNP…RVCV), 904-946 (AIDE…YQCS), and 947-986 (PIDP…DGFS). 10 disulfides stabilise this stretch: Cys822–Cys837, Cys831–Cys846, Cys865–Cys879, Cys873–Cys889, Cys891–Cys902, Cys908–Cys922, Cys916–Cys932, Cys934–Cys945, Cys951–Cys964, and Cys958–Cys974. 2 FAS1 domains span residues 988 to 1118 (YGDI…SQVL) and 1128 to 1253 (GQGL…SGVL). N-linked (GlcNAc...) asparagine glycans are attached at residues Asn1087, Asn1096, Asn1170, Asn1178, Asn1222, and Asn1274. Residues 1327–1392 (TLCEPCPGGL…CDCAHGLCQE (66 aa)) enclose the Laminin EGF-like 1 domain. 3 disulfides stabilise this stretch: Cys1332–Cys1346, Cys1340–Cys1356, and Cys1358–Cys1367. N-linked (GlcNAc...) asparagine glycosylation occurs at Asn1378. 15 disulfide bridges follow: Cys1379/Cys1390, Cys1383/Cys1400, Cys1402/Cys1411, Cys1420/Cys1430, Cys1424/Cys1440, Cys1442/Cys1453, Cys1459/Cys1472, Cys1466/Cys1482, Cys1484/Cys1495, Cys1501/Cys1514, Cys1508/Cys1524, Cys1526/Cys1538, Cys1544/Cys1557, Cys1551/Cys1567, and Cys1569/Cys1581. EGF-like domains lie at 1416 to 1454 (TSPQ…IFCS), 1455 to 1496 (EVDP…ELCQ), 1497 to 1539 (EINS…RTCE), and 1540 to 1582 (LLDP…LTCR). The N-linked (GlcNAc...) asparagine glycan is linked to Asn1471. 2 consecutive FAS1 domains span residues 1582–1708 (RARV…DRVL) and 1724–1864 (PRRN…DQLL). 2 N-linked (GlcNAc...) asparagine glycosylation sites follow: Asn1626 and Asn1727. A Laminin EGF-like 2 domain is found at 1966–2031 (SECQACPGGP…RCTVHGRCDE (66 aa)). 15 disulfides stabilise this stretch: Cys1971/Cys1985, Cys1979/Cys1995, Cys1997/Cys2006, Cys2018/Cys2029, Cys2023/Cys2039, Cys2041/Cys2050, Cys2060/Cys2070, Cys2064/Cys2076, Cys2078/Cys2089, Cys2095/Cys2108, Cys2102/Cys2117, Cys2119/Cys2130, Cys2136/Cys2150, Cys2144/Cys2160, and Cys2162/Cys2173. EGF-like domains are found at residues 2056-2090 (LQPV…RVCT), 2091-2131 (VADL…WSCR), and 2132-2174 (ARNP…LQCL). N-linked (GlcNAc...) asparagine glycosylation occurs at Asn2107. In terms of domain architecture, Link spans 2206–2301 (RAGVFHLQAT…SERWDAYCFR (96 aa)). Asn2222, Asn2261, Asn2290, Asn2334, Asn2347, Asn2379, Asn2393, Asn2400, and Asn2424 each carry an N-linked (GlcNAc...) asparagine glycan. Intrachain disulfides connect Cys2230–Cys2299 and Cys2254–Cys2275. The FAS1 7 domain occupies 2322 to 2459 (NGKLLDVLAA…GIIHALASPL (138 aa)). Residues 2479-2499 (GVGAVLAAGALLGLVAGALYL) traverse the membrane as a helical segment. Residues 2500-2570 (RARGKPMGFG…PDTQRILTVK (71 aa)) lie on the Cytoplasmic side of the membrane.

In terms of assembly, interacts with CHID1. High levels found in spleen, lymph node, liver and placenta. Also expressed in endothelial cells.

It localises to the membrane. Functionally, acts as a scavenger receptor for acetylated low density lipoprotein. Binds to both Gram-positive and Gram-negative bacteria and may play a role in defense against bacterial infection. When inhibited in endothelial tube formation assays, there is a marked decrease in cell-cell interactions, suggesting a role in angiogenesis. Involved in the delivery of newly synthesized CHID1/SI-CLP from the biosynthetic compartment to the endosomal/lysosomal system. This Homo sapiens (Human) protein is Stabilin-1 (STAB1).